Reading from the N-terminus, the 124-residue chain is Aspartate 1-decarboxylase (124 aa).

Residue S25 is the Schiff-base intermediate with substrate; via pyruvic acid of the active site. S25 is modified (pyruvic acid (Ser)). Substrate is bound at residue T57. Y58 functions as the Proton donor in the catalytic mechanism. A substrate-binding site is contributed by 71–73 (GAA).

The protein belongs to the PanD family. Heterooctamer of four alpha and four beta subunits. Pyruvate serves as cofactor. Post-translationally, is synthesized initially as an inactive proenzyme, which is activated by self-cleavage at a specific serine bond to produce a beta-subunit with a hydroxyl group at its C-terminus and an alpha-subunit with a pyruvoyl group at its N-terminus.

Its subcellular location is the cytoplasm. It carries out the reaction L-aspartate + H(+) = beta-alanine + CO2. Its pathway is cofactor biosynthesis; (R)-pantothenate biosynthesis; beta-alanine from L-aspartate: step 1/1. Functionally, catalyzes the pyruvoyl-dependent decarboxylation of aspartate to produce beta-alanine. This is Aspartate 1-decarboxylase from Bdellovibrio bacteriovorus (strain ATCC 15356 / DSM 50701 / NCIMB 9529 / HD100).